The following is a 393-amino-acid chain: Probable RNA methyltransferase sce3898 (393 aa).

E82 acts as the Proton acceptor in catalysis. The Radical SAM core domain maps to 90–329 (RPGRYSACVS…VRSARLDAFR (240 aa)). A disulfide bridge links C97 with C353. The [4Fe-4S] cluster site is built by C104, C108, and C111. Residues 157-158 (GE), 212-214 (SLG), and N294 each bind S-adenosyl-L-methionine. C353 (S-methylcysteine intermediate) is an active-site residue. The disordered stretch occupies residues 357–393 (ARPSAEAQRPGGRRAPPRPGATAGAADVGPSAPPRPA). The span at 373–382 (PRPGATAGAA) shows a compositional bias: low complexity.

It belongs to the radical SAM superfamily. RlmN family. The cofactor is [4Fe-4S] cluster.

The protein localises to the cytoplasm. The polypeptide is Probable RNA methyltransferase sce3898 (Sorangium cellulosum (strain So ce56) (Polyangium cellulosum (strain So ce56))).